Consider the following 190-residue polypeptide: Hypoxanthine/guanine phosphoribosyltransferase (190 aa).

Belongs to the purine/pyrimidine phosphoribosyltransferase family. Archaeal HPRT subfamily. In terms of assembly, homodimer.

The protein localises to the cytoplasm. It catalyses the reaction IMP + diphosphate = hypoxanthine + 5-phospho-alpha-D-ribose 1-diphosphate. It carries out the reaction GMP + diphosphate = guanine + 5-phospho-alpha-D-ribose 1-diphosphate. The protein operates within purine metabolism; IMP biosynthesis via salvage pathway; IMP from hypoxanthine: step 1/1. Catalyzes a salvage reaction resulting in the formation of IMP that is energically less costly than de novo synthesis. This Methanobacterium lacus (strain AL-21) protein is Hypoxanthine/guanine phosphoribosyltransferase.